The sequence spans 942 residues: Endoprotease bli-4 (942 aa).

The N-terminal stretch at 1–22 is a signal peptide; that stretch reads MRISIGRIAWQILAVLIAVAFT. Positions 23–116 are excised as a propeptide; it reads IEHDSICDES…EQRPKKRVKR (94 aa). At 117 to 871 the chain is on the lumenal side; it reads DYILLDNDVH…TLLIDSNKSS (755 aa). Asp-124 provides a ligand contact to Ca(2+). Residues 130–160 are disordered; the sequence is PFRRSVLNRDGTRRAQRQQPQSPREIPSLPF. Residues 168–483 enclose the Peptidase S8 domain; sequence QWYLHGGAVG…YGLIDGGALV (316 aa). N-linked (GlcNAc...) asparagine glycosylation is present at Asn-195. Asp-202 (charge relay system) is an active-site residue. Asp-203 contacts substrate. Asp-211, Asp-223, Asp-228, and Asp-230 together coordinate Ca(2+). A disordered region spans residues 211 to 242; the sequence is DLAANYDPLASTDINDHDDDPTPQNNGDNKHG. 238-239 is a substrate binding site; that stretch reads DN. Catalysis depends on His-241, which acts as the Charge relay system. Positions 252, 255, 257, and 259 each coordinate Ca(2+). Cystine bridges form between Cys-258/Cys-407 and Cys-350/Cys-380. Substrate-binding positions include Glu-283, 300–305, Asp-311, and 339–342; these read SWGPED and ASGN. Asp-305 is a binding site for Ca(2+). Asp-348 serves as a coordination point for Ca(2+). The substrate site is built by Asp-353 and Tyr-355. Glu-378 contributes to the Ca(2+) binding site. Ser-415 (charge relay system) is an active-site residue. Ser-415 is a substrate binding site. The P/Homo B domain occupies 491 to 629; that stretch reads TVPEQHICTY…TLLLYGTADP (139 aa). Cys-498 and Cys-527 are oxidised to a cystine. Asn-519 carries N-linked (GlcNAc...) asparagine glycosylation. 3 FU repeats span residues 674-723, 725-777, and 804-850; these read NCHD…YYLD, DKCK…LVAD, and GKCD…STKS. Asn-868 carries N-linked (GlcNAc...) asparagine glycosylation. The helical transmembrane segment at 872 to 892 threads the bilayer; the sequence is GFGLMFWIVVSLIAACGICAC. The Cytoplasmic segment spans residues 893 to 942; the sequence is KKCASETKSSNVEYAPLAQYNATNGAINLGAHTDDEDDDEDEVFVNPQIV. The interval 922–942 is disordered; sequence GAHTDDEDDDEDEVFVNPQIV. Residues 926-935 show a composition bias toward acidic residues; it reads DDEDDDEDEV.

The protein belongs to the peptidase S8 family. Furin subfamily. It depends on Ca(2+) as a cofactor. In terms of tissue distribution, in larvae and adults, expressed in all hypodermal cells, vulva and ventral nerve cords. Most highly expressed isoform in the embryonic epidermis. As to expression, expressed primarily in the germline. In terms of tissue distribution, expressed primarily in pharyngeal epithelial cells.

It localises to the membrane. Serine endoprotease which cleaves proproteins at paired basic amino acids at the consensus RX(K/R)R motif. Involved in N-terminal processing of cuticle collagens and plays a role in cuticle biosynthesis. May cleave both sqt-3 and dpy-17 collagens to promote their secretion. Acts in ASEL sensory neurons to regulate high salt chemotaxis responses probably by cleaving insulin-like protein ins-6 into its mature and active form. Essential for embryonic and larval development. In terms of biological role, involved in cuticle biosynthesis but dispensable for larval development. The polypeptide is Endoprotease bli-4 (bli-4) (Caenorhabditis elegans).